The primary structure comprises 60 residues: Large ribosomal subunit protein uL30 (60 aa).

The protein belongs to the universal ribosomal protein uL30 family. As to quaternary structure, part of the 50S ribosomal subunit.

In Oceanobacillus iheyensis (strain DSM 14371 / CIP 107618 / JCM 11309 / KCTC 3954 / HTE831), this protein is Large ribosomal subunit protein uL30.